The primary structure comprises 1176 residues: Myosin light chain kinase, smooth muscle (1176 aa).

Residues 1-41 form an actin-binding (calcium/calmodulin-sensitive) region; it reads MDFRANLQRQVKPKTLSEEERKVHGPQQVDFRSVLAKKGTP. The disordered stretch occupies residues 1–354; the sequence is MDFRANLQRQ…SEKRPESRGT (354 aa). A calmodulin-binding region spans residues 26–41; that stretch reads PQQVDFRSVLAKKGTP. Pro residues predominate over residues 43 to 55; the sequence is TPVPEKVPPPKPA. 16 repeat units span residues 100-111, 112-123, 124-135, 136-147, 148-159, 160-171, 172-183, 184-195, 196-207, 208-219, 220-231, 232-243, 244-255, 256-267, 268-279, and 280-291. The tract at residues 100–291 is 16 X 12 AA tandem repeats; it reads FLKPVGNAKL…KLVGNAKPAE (192 aa). S202 is subject to Phosphoserine. An actin-binding (calcium/calmodulin-insensitive) region spans residues 319–721; that stretch reads PTGKEELKKE…TVTVNTEQKV (403 aa). Positions 320-335 are enriched in basic and acidic residues; the sequence is TGKEELKKEIKNDVNC. Residues 356-444 form the Ig-like C2-type 1 domain; it reads PTFEEKLQDL…GQAESSCQVT (89 aa). A disulfide bond links C377 and C428. Residues 448 to 497 form a disordered region; that stretch reads PDAPTSENAKAPEMKARRPKSSLPPVLGTESDATVKKKPAPKTPPKAAMP. In terms of domain architecture, Ig-like C2-type 2 spans 498–586; the sequence is PQIIQFPEDQ…GSRQAQVNLT (89 aa). In terms of domain architecture, Fibronectin type-III spans 594 to 686; that stretch reads PAGTPCASDI…QESELTALGE (93 aa). Positions 673–707 are disordered; it reads SEPSQESELTALGEKPEEEPKDEVEVSDDDEKEPE. Acidic residues predominate over residues 688 to 706; sequence PEEEPKDEVEVSDDDEKEP. Residue S699 is modified to Phosphoserine. At Y710 the chain carries Phosphotyrosine; by ABL1. In terms of domain architecture, Protein kinase spans 725-980; that stretch reads YDIEERLGSG…CTQCLQHPWL (256 aa). ATP is bound by residues 731–739 and K754; that span reads LGSGKFGQV. A Phosphotyrosine; by ABL1 modification is found at Y836. D846 serves as the catalytic Proton acceptor. Y896 carries the post-translational modification Phosphotyrosine; by ABL1. The calmodulin-binding stretch occupies residues 972-1035; sequence TQCLQHPWLM…SGLSGRKSST (64 aa). 5 positions are modified to phosphoserine: S1020, S1021, S1033, S1034, and S1037. T1039 carries the post-translational modification Phosphothreonine. S1040 is modified (phosphoserine). One can recognise an Ig-like C2-type 3 domain in the interval 1069-1158; sequence PYFSKTIRDL…GEATCTAELI (90 aa). A disulfide bridge links C1090 with C1142.

The protein belongs to the protein kinase superfamily. CAMK Ser/Thr protein kinase family. All isoforms including Telokin bind calmodulin. Interacts with SVIL. Interacts with CTTN; this interaction is reduced during thrombin-induced endothelial cell (EC) contraction but is promoted by the barrier-protective agonist sphingosine 1-phosphate (S1P) within lamellipodia. A complex made of ABL1, CTTN and MYLK regulates cortical actin-based cytoskeletal rearrangement critical to sphingosine 1-phosphate (S1P)-mediated endothelial cell (EC) barrier enhancement. Binds to NAA10/ARD1 and PTK2B/PYK2. Requires Mg(2+) as cofactor. Ca(2+) serves as cofactor. The C-terminus is deglutamylated by AGTPBP1/CCP1, AGBL1/CCP4 and AGBL4/CCP6, leading to the formation of Myosin light chain kinase, smooth muscle, deglutamylated form. The consequences of C-terminal deglutamylation are unknown. Post-translationally, can probably be down-regulated by phosphorylation. Tyrosine phosphorylation by ABL1 increases kinase activity, reverses MLCK-mediated inhibition of Arp2/3-mediated actin polymerization, and enhances CTTN-binding. Phosphorylation by SRC promotes CTTN binding.

It is found in the cytoplasm. The protein resides in the cell projection. Its subcellular location is the lamellipodium. The protein localises to the cleavage furrow. It localises to the cytoskeleton. It is found in the stress fiber. The catalysed reaction is L-seryl-[myosin light chain] + ATP = O-phospho-L-seryl-[myosin light chain] + ADP + H(+). The enzyme catalyses L-threonyl-[myosin light chain] + ATP = O-phospho-L-threonyl-[myosin light chain] + ADP + H(+). Calcium/calmodulin-dependent myosin light chain kinase implicated in smooth muscle contraction via phosphorylation of myosin light chains (MLC). Also regulates actin-myosin interaction through a non-kinase activity. Phosphorylates PTK2B/PYK2 and myosin light-chains. Involved in the inflammatory response (e.g. apoptosis, vascular permeability, leukocyte diapedesis), cell motility and morphology, airway hyperreactivity and other activities relevant to asthma. Required for tonic airway smooth muscle contraction that is necessary for physiological and asthmatic airway resistance. Necessary for gastrointestinal motility. Implicated in the regulation of endothelial as well as vascular permeability, probably via the regulation of cytoskeletal rearrangements. In the nervous system it has been shown to control the growth initiation of astrocytic processes in culture and to participate in transmitter release at synapses formed between cultured sympathetic ganglion cells. Critical participant in signaling sequences that result in fibroblast apoptosis. Plays a role in the regulation of epithelial cell survival. Required for epithelial wound healing, especially during actomyosin ring contraction during purse-string wound closure. Mediates RhoA-dependent membrane blebbing. Triggers TRPC5 channel activity in a calcium-dependent signaling, by inducing its subcellular localization at the plasma membrane. Promotes cell migration (including tumor cells) and tumor metastasis. PTK2B/PYK2 activation by phosphorylation mediates ITGB2 activation and is thus essential to trigger neutrophil transmigration during acute lung injury (ALI). May regulate optic nerve head astrocyte migration. Probably involved in mitotic cytoskeletal regulation. Regulates tight junction probably by modulating ZO-1 exchange in the perijunctional actomyosin ring. Mediates burn-induced microvascular barrier injury; triggers endothelial contraction in the development of microvascular hyperpermeability by phosphorylating MLC. Essential for intestinal barrier dysfunction. Mediates Giardia spp.-mediated reduced epithelial barrier function during giardiasis intestinal infection via reorganization of cytoskeletal F-actin and tight junctional ZO-1. Necessary for hypotonicity-induced Ca(2+) entry and subsequent activation of volume-sensitive organic osmolyte/anion channels (VSOAC) in cervical cancer cells. The sequence is that of Myosin light chain kinase, smooth muscle (MYLK) from Bos taurus (Bovine).